The sequence spans 390 residues: Dihydroorotase (390 aa).

Zn(2+) contacts are provided by His54 and His56. Substrate is bound by residues 56-58 and Asn88; that span reads HIR. Residues Lys136, His160, His197, and Asp259 each coordinate Zn(2+). N6-carboxylysine is present on Lys136. Asp259 is an active-site residue. Residues His263 and 277 to 278 contribute to the substrate site; that span reads PG.

The protein belongs to the metallo-dependent hydrolases superfamily. DHOase family. Class I DHOase subfamily. The cofactor is Zn(2+).

The enzyme catalyses (S)-dihydroorotate + H2O = N-carbamoyl-L-aspartate + H(+). The protein operates within pyrimidine metabolism; UMP biosynthesis via de novo pathway; (S)-dihydroorotate from bicarbonate: step 3/3. Functionally, catalyzes the reversible cyclization of carbamoyl aspartate to dihydroorotate. The protein is Dihydroorotase of Saccharolobus solfataricus (strain ATCC 35092 / DSM 1617 / JCM 11322 / P2) (Sulfolobus solfataricus).